A 115-amino-acid chain; its full sequence is Large ribosomal subunit protein bL19 (115 aa).

This sequence belongs to the bacterial ribosomal protein bL19 family.

Its function is as follows. This protein is located at the 30S-50S ribosomal subunit interface and may play a role in the structure and function of the aminoacyl-tRNA binding site. In Latilactobacillus sakei subsp. sakei (strain 23K) (Lactobacillus sakei subsp. sakei), this protein is Large ribosomal subunit protein bL19.